Consider the following 384-residue polypeptide: Cyclin-J (384 aa).

Residues 15 to 143 (DIHQTLRYKE…LLETFEWNLC (129 aa)) enclose the Cyclin N-terminal domain.

Belongs to the cyclin family. Cyclin J subfamily.

The protein is Cyclin-J (ccnj) of Xenopus laevis (African clawed frog).